Consider the following 324-residue polypeptide: UDP-N-acetylenolpyruvoylglucosamine reductase (324 aa).

The FAD-binding PCMH-type domain occupies 39–220 (RTGGLAELFY…RAAMHEVALH (182 aa)). The active site involves Arg-185. The active-site Proton donor is Ser-234. Residue Glu-304 is part of the active site.

Belongs to the MurB family. Requires FAD as cofactor.

Its subcellular location is the cytoplasm. It carries out the reaction UDP-N-acetyl-alpha-D-muramate + NADP(+) = UDP-N-acetyl-3-O-(1-carboxyvinyl)-alpha-D-glucosamine + NADPH + H(+). The protein operates within cell wall biogenesis; peptidoglycan biosynthesis. Functionally, cell wall formation. The protein is UDP-N-acetylenolpyruvoylglucosamine reductase of Bartonella bacilliformis (strain ATCC 35685 / KC583 / Herrer 020/F12,63).